The primary structure comprises 544 residues: Chaperonin GroEL (544 aa).

Residues 29 to 32, Lys-50, 86 to 90, Gly-414, 479 to 481, and Asp-495 contribute to the ATP site; these read TLGP, DGTTT, and DAA.

This sequence belongs to the chaperonin (HSP60) family. Forms a cylinder of 14 subunits composed of two heptameric rings stacked back-to-back. Interacts with the co-chaperonin GroES.

It localises to the cytoplasm. It carries out the reaction ATP + H2O + a folded polypeptide = ADP + phosphate + an unfolded polypeptide.. Functionally, together with its co-chaperonin GroES, plays an essential role in assisting protein folding. The GroEL-GroES system forms a nano-cage that allows encapsulation of the non-native substrate proteins and provides a physical environment optimized to promote and accelerate protein folding. This chain is Chaperonin GroEL, found in Treponema denticola (strain ATCC 35405 / DSM 14222 / CIP 103919 / JCM 8153 / KCTC 15104).